The primary structure comprises 1198 residues: Potassium/sodium hyperpolarization-activated cyclic nucleotide-gated channel 4 (1198 aa).

Residues 1–266 (MDKLPPSMRK…PYSDFRFYWD (266 aa)) are Cytoplasmic-facing. Residues 25–183 (IMDEEEDGEE…PASASCEQPS (159 aa)) form a disordered region. Positions 26–36 (MDEEEDGEEEG) are enriched in acidic residues. Residues 105–118 (SRGGGSGGAGGGSS) show a composition bias toward gly residues. Residues 121–132 (HLHDSAEERRLI) are compositionally biased toward basic and acidic residues. Position 139 is a phosphoserine (serine 139). Residues 164–174 (ASPPPQQPPQP) are compositionally biased toward pro residues. Residues 209 to 260 (GQSGFMQRQFGAMLQPGVNKFSLRMFGSQKAVEREQERVKSAGFWIIHPYSD) form an involved in subunit assembly region. The helical transmembrane segment at 267–287 (LTMLLLMVGNLIIIPVGITFF) threads the bilayer. Residues 288-293 (KDENTT) are Extracellular-facing. The chain crosses the membrane as a helical span at residues 294–314 (PWIVFNVVSDTFFLIDLVLNF). The Cytoplasmic segment spans residues 315-340 (RTGIVVEDNTEIILDPQRIKMKYLKS). The helical transmembrane segment at 341–361 (WFVVDFISSIPVDYIFLIVET) threads the bilayer. Topologically, residues 362–368 (RIDSEVY) are extracellular. Residues 369-389 (KTARALRIVRFTKILSLLRLL) traverse the membrane as a helical; Voltage-sensor segment. Topologically, residues 390–420 (RLSRLIRYIHQWEEIFHMTYDLASAVVRIVN) are cytoplasmic. Residues 421-441 (LIGMMLLLCHWDGCLQFLVPM) traverse the membrane as a helical segment. Topologically, residues 442–464 (LQDFPHDCWVSINGMVNNSWGKQ) are extracellular. Residue asparagine 458 is glycosylated (N-linked (GlcNAc...) asparagine). An intramembrane region (pore-forming) is located at residues 465–486 (YSYALFKAMSHMLCIGYGRQAP). At 487–496 (VGMSDVWLTM) the chain is on the extracellular side. Residues 497-517 (LSMIVGATCYAMFIGHATALI) traverse the membrane as a helical segment. The Cytoplasmic portion of the chain corresponds to 518–1198 (QSLDSSRRQY…PVRSKLPSNL (681 aa)). 3',5'-cyclic GMP is bound by residues tyrosine 559, lysine 562, phenylalanine 564, and glutamate 566. Residues glycine 659, glutamate 660, cysteine 662, arginine 669, threonine 670, valine 673, and arginine 710 each coordinate 3',5'-cyclic AMP. The segment at 804 to 1198 (AIFRPPPGPG…PVRSKLPSNL (395 aa)) is disordered. Low complexity-rich tracts occupy residues 831 to 856 (SLIP…SSSS) and 866 to 880 (SAPP…SSSS). The span at 881–894 (SPPPGACSSPPAPT) shows a compositional bias: pro residues. Composition is skewed to low complexity over residues 895-905 (PSTSTAATTTG), 913-937 (LGGS…SPQA), and 965-985 (RSPS…SPGL). A compositionally biased stretch (pro residues) spans 1027–1040 (GHSPGPPRTFPSAP). Residues 1043-1054 (ASGSHGSLLLPP) are compositionally biased toward low complexity. Serine 1103 and serine 1106 each carry phosphoserine. The span at 1120 to 1132 (AGGGSGSSGGLGP) shows a compositional bias: gly residues.

The protein belongs to the potassium channel HCN family. Homotetramer. The potassium channel is composed of a homo- or heterotetrameric complex of pore-forming subunits. Interacts with PEX5L with a 4:4 HCN4:PEX5L stoichiometry; reduces the effects of cAMP on the voltage-dependence and rate of activation. Interacts with IRAG1; regulates HCN4 channel activity. Interacts with IRAG2; regulates HCN4 channel activity. In terms of processing, S-palmitoylated. Highly expressed in pyramidal and granule layer of the hippocampus, in thalamus anterior nucleus, in the supraoptic nucleus in hypothalamus, in cerebellum, and in trapezoid nuclei and superior olivary complex in the auditory system. Detected in a subset of elongated cells in taste buds.

The protein resides in the cell membrane. The enzyme catalyses K(+)(in) = K(+)(out). It catalyses the reaction Na(+)(in) = Na(+)(out). Activated by cAMP and at 100 times higher concentrationsand to a lesser extent by cGMP and cCMP. cAMP binding causes a conformation change that leads to the assembly of an active tetramer and channel opening. Binding of cAMP removes a tonic inhibition conferred by cyclic nucleotide-binding domain (CNBD) on channel opening. Cyclic dinucleotides can modulate HCN4 channel; cyclic dinucleotides acting as potent antagonists of cAMP. Inhibited by extracellular Cs(+) ions. Auxiliary subunits can also regulate HCN4 channel. IRAG1 causes a gain-of-function by shifting HCN4 activation to more depolarized membrane potentials in the absence of cAMP. In contrast, IRAG2 causes a loss-of-function by inhibiting cAMP-dependent potentiation of HCN4 activation. Its function is as follows. Hyperpolarization-activated ion channel that are permeable to Na(+) and K(+) ions with very slow activation and inactivation. Exhibits higher selectivity for K(+) over Na(+) ions. Contributes to the native pacemaker currents in heart (If) that regulate the rhythm of heart beat. Contributes to the native pacemaker currents in neurons (Ih). May mediate responses to sour stimuli. The sequence is that of Potassium/sodium hyperpolarization-activated cyclic nucleotide-gated channel 4 (Hcn4) from Rattus norvegicus (Rat).